We begin with the raw amino-acid sequence, 207 residues long: ATP-dependent Clp protease proteolytic subunit (207 aa).

The Nucleophile role is filled by Ser111. The active site involves His136.

This sequence belongs to the peptidase S14 family. As to quaternary structure, fourteen ClpP subunits assemble into 2 heptameric rings which stack back to back to give a disk-like structure with a central cavity, resembling the structure of eukaryotic proteasomes.

It localises to the cytoplasm. It catalyses the reaction Hydrolysis of proteins to small peptides in the presence of ATP and magnesium. alpha-casein is the usual test substrate. In the absence of ATP, only oligopeptides shorter than five residues are hydrolyzed (such as succinyl-Leu-Tyr-|-NHMec, and Leu-Tyr-Leu-|-Tyr-Trp, in which cleavage of the -Tyr-|-Leu- and -Tyr-|-Trp bonds also occurs).. Its function is as follows. Cleaves peptides in various proteins in a process that requires ATP hydrolysis. Has a chymotrypsin-like activity. Plays a major role in the degradation of misfolded proteins. This Aliivibrio salmonicida (strain LFI1238) (Vibrio salmonicida (strain LFI1238)) protein is ATP-dependent Clp protease proteolytic subunit.